Consider the following 154-residue polypeptide: tRNA (cytidine(34)-2'-O)-methyltransferase (154 aa).

The S-adenosyl-L-methionine site is built by Leu78, Gly100, Ile122, and Ser130.

This sequence belongs to the class IV-like SAM-binding methyltransferase superfamily. RNA methyltransferase TrmH family. TrmL subfamily. Homodimer.

It localises to the cytoplasm. The catalysed reaction is cytidine(34) in tRNA + S-adenosyl-L-methionine = 2'-O-methylcytidine(34) in tRNA + S-adenosyl-L-homocysteine + H(+). It carries out the reaction 5-carboxymethylaminomethyluridine(34) in tRNA(Leu) + S-adenosyl-L-methionine = 5-carboxymethylaminomethyl-2'-O-methyluridine(34) in tRNA(Leu) + S-adenosyl-L-homocysteine + H(+). Functionally, methylates the ribose at the nucleotide 34 wobble position in the two leucyl isoacceptors tRNA(Leu)(CmAA) and tRNA(Leu)(cmnm5UmAA). Catalyzes the methyl transfer from S-adenosyl-L-methionine to the 2'-OH of the wobble nucleotide. This chain is tRNA (cytidine(34)-2'-O)-methyltransferase, found in Saccharophagus degradans (strain 2-40 / ATCC 43961 / DSM 17024).